The following is a 512-amino-acid chain: NAD(P)H-quinone oxidoreductase chain 4, chloroplastic (512 aa).

The next 14 membrane-spanning stretches (helical) occupy residues 4 to 24, 34 to 54, 87 to 107, 111 to 131, 134 to 154, 167 to 187, 208 to 228, 242 to 262, 274 to 294, 308 to 328, 330 to 350, 374 to 396, 417 to 437, and 462 to 482; these read VPWLTAIVLFPVSAGLLIPLL, WYALGICLLDLILMTYVFGCY, IGLILLTGFVTTLATLAAWPV, PKLFYFLMLAMYSGQLGLFAS, ILLFFVMWELELIPVYLLLSM, FILYTAGGSIFLLAGLLTASL, GLEILIYLGFLIAYAVKLPAF, HYSTCMLLAGILLKMGGYGFI, TVFAPWLVALGAYQIVYAALV, SSVSHMGFVLVGAGSLSDLGL, GAMLQMISHGLIGASLFFLAG, MFAMFTTCAMASLALPGMSGFVS, IITLIEAVGIILTPIYLLSMV, and VFVLGSLLLPMIGIGIYPNFA.

The protein belongs to the complex I subunit 4 family.

The protein localises to the plastid. The protein resides in the chloroplast thylakoid membrane. The catalysed reaction is a plastoquinone + NADH + (n+1) H(+)(in) = a plastoquinol + NAD(+) + n H(+)(out). It catalyses the reaction a plastoquinone + NADPH + (n+1) H(+)(in) = a plastoquinol + NADP(+) + n H(+)(out). This is NAD(P)H-quinone oxidoreductase chain 4, chloroplastic from Zygnema circumcarinatum (Green alga).